The following is a 1257-amino-acid chain: Period circadian protein homolog 2 (1257 aa).

Positions 1–59 are disordered; that stretch reads MNGYVDFSPSPTSPTQEPGEPQPTQAVLQEDVDMSSGSSGNENCSTGRDSQGSDCDDSG. Low complexity predominate over residues 8–25; that stretch reads SPSPTSPTQEPGEPQPTQ. The span at 35 to 53 shows a compositional bias: polar residues; the sequence is SSGSSGNENCSTGRDSQGS. Residues 109-118 carry the Nuclear export signal 1 motif; the sequence is LIRTLRELKV. The 68-residue stretch at 179–246 folds into the PAS 1 domain; the sequence is ITSEYIVKNS…FHSYTTPYKL (68 aa). Residues 306-310 carry the LXXLL motif; that stretch reads LCCLL. Residues 319-385 form the PAS 2 domain; sequence YEAPRIPPEK…MLAIHKKILQ (67 aa). Positions 393-436 constitute a PAC domain; that stretch reads YSPIRFRTRNGEYITLDTSWSSFINPWSRKISFIIGRHKVRVGP. Positions 460 to 469 match the Nuclear export signal 2 motif; sequence LTEQIHRLLM. The segment at 471 to 567 is disordered; that stretch reads PVPHSGSSGY…RDSSGASLPK (97 aa). The tract at residues 478-482 is important for protein stability; sequence SGYGS. Polar residues-rich tracts occupy residues 493–504 and 518–528; these read MSQTSSSDSNGQ and SGKSQSKSHFS. The CSNK1E binding domain stretch occupies residues 510-709; sequence RRSGIFKTSG…DAAGGLSQEK (200 aa). Serine 525, serine 528, serine 531, serine 538, and serine 544 each carry phosphoserine. Residues 541–555 show a composition bias toward polar residues; it reads EMQSSPPAQVRSVTT. Threonine 554 carries the phosphothreonine modification. Phosphoserine occurs at positions 659, 693, 697, 706, 758, and 763. 2 disordered regions span residues 678–706 and 757–833; these read DKKPQPELETVEDVASGPESQDDAAGGLS and RSRA…CPSA. A Nuclear localization signal motif is present at residues 778 to 794; sequence KKTGKNRKLKSKRVKTR. The span at 779-792 shows a compositional bias: basic residues; the sequence is KTGKNRKLKSKRVK. Over residues 821-832 the composition is skewed to low complexity; it reads SPSDTSQSSCPS. Position 858 is a phosphothreonine (threonine 858). The interval 882–1067 is interaction with PPARG; that stretch reads EFAVQPLPFA…DLCSATGSAL (186 aa). A Phosphoserine modification is found at serine 939. A Phosphothreonine modification is found at threonine 964. Serine 971 carries the phosphoserine modification. Residues 983-990 carry the Nuclear export signal 3 motif; that stretch reads LQLNLLQL. Positions 993–1044 are disordered; it reads APESSTGAAGTLGTTGTAASGLDCTSGASRDRQPKAPPTCSEPSDTQNSDAI. The segment covering 996 to 1014 has biased composition (low complexity); it reads SSTGAAGTLGTTGTAASGL. Over residues 1033-1044 the composition is skewed to polar residues; it reads SEPSDTQNSDAI. The short motif at 1051 to 1055 is the LXXLL element; that stretch reads LNLLL. The span at 1070-1089 shows a compositional bias: low complexity; the sequence is SGASATSDSLGSSSLGCDTS. The segment at 1070–1108 is disordered; sequence SGASATSDSLGSSSLGCDTSRSGAGSSDTSHTSKYFGSI. Polar residues predominate over residues 1090–1108; the sequence is RSGAGSSDTSHTSKYFGSI. Phosphoserine is present on serine 1126. The interval 1157 to 1257 is CRY binding domain; sequence SRDLQAVLKE…LANPRKEAQT (101 aa). Positions 1226–1257 are disordered; sequence EEDSPSLGLCDTSEAKEEESGQLANPRKEAQT.

As to quaternary structure, homodimer. Component of the circadian core oscillator, which includes the CRY proteins, CLOCK or NPAS2, BMAL1 or BMAL2, CSNK1D and/or CSNK1E, TIMELESS, and the PER proteins. Interacts with CLOCK-BMAL1 (off DNA). Interacts directly with PER1 and PER3, and through a C-terminal domain, with CRY1 and CRY2. Interacts (via PAS 2 domain) with TIMELESS. Interacts with NFIL3. Different large complexes have been identified with different repressive functions. The core of PER complexes is composed of at least PER1, PER2, PER3, CRY1, CRY2, CSNK1D and/or CSNK1E. The large PER complex involved in the repression of transcriptional termination is composed of at least PER2, CDK9, DDX5, DHX9, NCBP1 and POLR2A (active). The large PER complex involved in the histone deacetylation is composed of at least HDAC1, PER2, SFPQ and SIN3A. The large PER complex involved in the histone methylation is composed of at least PER2, CBX3, TRIM28, SUV39H1 and/or SUV39H2; CBX3 mediates the formation of the complex. Interacts with SETX; the interaction inhibits termination of circadian target genes. Interacts with the nuclear receptors HNF4A, NR1D1, NR4A2, RORA, PPARA, PPARG and THRA; the interaction with at least PPARG is ligand dependent. Interacts with PML. Interacts (phosphorylated) with BTRC and FBXW11; the interactions trigger proteasomal degradation. Interacts with NONO and SFPQ. Interacts with CAVIN3. Interacts with MAGEL2. Interacts with MAP1LC3B. Interacts with HNF4A. Post-translationally, acetylated. Deacetylated by SIRT1, resulting in decreased protein stability. Deacetylated by SIRT6, preventing its degradation by the proteasome, resulting in increased protein stability. In terms of processing, phosphorylated by CSNK1E and CSNK1D. Phosphorylation results in PER2 protein degradation. May be dephosphorylated by PP1. Ubiquitinated, leading to its proteasomal degradation. Ubiquitination may be inhibited by CRY1. As to expression, expressed in all tissues examined including eye, brain, heart, lung, spleen, liver, pancreas and kidney. In the CNS, highly expressed in the SCN, internal granular layer of granular cells of the olfactory bulb, tuberculum olfactorium, piriform cortex, gyrus dentatus of the hippocampus, cerebellum, pars tuberalis/median eminence, and pituitary, and moderately in the tenia tecta, caudate putamen, accumbens nucleus, superior and inferior colliculus and pineal gland.

The protein localises to the nucleus. It is found in the cytoplasm. Its subcellular location is the perinuclear region. In terms of biological role, transcriptional repressor which forms a core component of the circadian clock. The circadian clock, an internal time-keeping system, regulates various physiological processes through the generation of approximately 24 hour circadian rhythms in gene expression, which are translated into rhythms in metabolism and behavior. It is derived from the Latin roots 'circa' (about) and 'diem' (day) and acts as an important regulator of a wide array of physiological functions including metabolism, sleep, body temperature, blood pressure, endocrine, immune, cardiovascular, and renal function. Consists of two major components: the central clock, residing in the suprachiasmatic nucleus (SCN) of the brain, and the peripheral clocks that are present in nearly every tissue and organ system. Both the central and peripheral clocks can be reset by environmental cues, also known as Zeitgebers (German for 'timegivers'). The predominant Zeitgeber for the central clock is light, which is sensed by retina and signals directly to the SCN. The central clock entrains the peripheral clocks through neuronal and hormonal signals, body temperature and feeding-related cues, aligning all clocks with the external light/dark cycle. Circadian rhythms allow an organism to achieve temporal homeostasis with its environment at the molecular level by regulating gene expression to create a peak of protein expression once every 24 hours to control when a particular physiological process is most active with respect to the solar day. Transcription and translation of core clock components (CLOCK, NPAS2, BMAL1, BMAL2, PER1, PER2, PER3, CRY1 and CRY2) plays a critical role in rhythm generation, whereas delays imposed by post-translational modifications (PTMs) are important for determining the period (tau) of the rhythms (tau refers to the period of a rhythm and is the length, in time, of one complete cycle). A diurnal rhythm is synchronized with the day/night cycle, while the ultradian and infradian rhythms have a period shorter and longer than 24 hours, respectively. Disruptions in the circadian rhythms contribute to the pathology of cardiovascular diseases, cancer, metabolic syndrome and aging. A transcription/translation feedback loop (TTFL) forms the core of the molecular circadian clock mechanism. Transcription factors, CLOCK or NPAS2 and BMAL1 or BMAL2, form the positive limb of the feedback loop, act in the form of a heterodimer and activate the transcription of core clock genes and clock-controlled genes (involved in key metabolic processes), harboring E-box elements (5'-CACGTG-3') within their promoters. The core clock genes: PER1/2/3 and CRY1/2 which are transcriptional repressors form the negative limb of the feedback loop and interact with the CLOCK|NPAS2-BMAL1|BMAL2 heterodimer inhibiting its activity and thereby negatively regulating their own expression. This heterodimer also activates nuclear receptors NR1D1/2 and RORA/B/G, which form a second feedback loop and which activate and repress BMAL1 transcription, respectively. PER1 and PER2 proteins transport CRY1 and CRY2 into the nucleus with appropriate circadian timing, but also contribute directly to repression of clock-controlled target genes through interaction with several classes of RNA-binding proteins, helicases and others transcriptional repressors. PER appears to regulate circadian control of transcription by at least three different modes. First, interacts directly with the CLOCK-BMAL1 at the tail end of the nascent transcript peak to recruit complexes containing the SIN3-HDAC that remodel chromatin to repress transcription. Second, brings H3K9 methyltransferases such as SUV39H1 and SUV39H2 to the E-box elements of the circadian target genes, like PER2 itself or PER1. The recruitment of each repressive modifier to the DNA seems to be very precisely temporally orchestrated by the large PER complex, the deacetylases acting before than the methyltransferases. Additionally, large PER complexes are also recruited to the target genes 3' termination site through interactions with RNA-binding proteins and helicases that may play a role in transcription termination to regulate transcription independently of CLOCK-BMAL1 interactions. Recruitment of large PER complexes to the elongating polymerase at PER and CRY termination sites inhibited SETX action, impeding RNA polymerase II release and thereby repressing transcriptional reinitiation. May propagate clock information to metabolic pathways via the interaction with nuclear receptors. Coactivator of PPARA and corepressor of NR1D1, binds rhythmically at the promoter of nuclear receptors target genes like BMAL1 or G6PC1. Directly and specifically represses PPARG proadipogenic activity by blocking PPARG recruitment to target promoters and thereby transcriptional activation. Required for fatty acid and lipid metabolism, is involved as well in the regulation of circulating insulin levels. Plays an important role in the maintenance of cardiovascular functions through the regulation of NO and vasodilatatory prostaglandins production in aortas. Controls circadian glutamate uptake in synaptic vesicles through the regulation of VGLUT1 expression. May also be involved in the regulation of inflammatory processes. Represses the CLOCK-BMAL1 induced transcription of BHLHE40/DEC1 and ATF4. Negatively regulates the formation of the TIMELESS-CRY1 complex by competing with TIMELESS for binding to CRY1. The sequence is that of Period circadian protein homolog 2 from Rattus norvegicus (Rat).